A 306-amino-acid chain; its full sequence is N-acetylmuramic acid 6-phosphate etherase (306 aa).

In terms of domain architecture, SIS spans 55-218 (IVPRMKKGGR…STGVMIKLGK (164 aa)). Residue Glu-83 is the Proton donor of the active site. Glu-114 is a catalytic residue.

Belongs to the GCKR-like family. MurNAc-6-P etherase subfamily. Homodimer.

It carries out the reaction N-acetyl-D-muramate 6-phosphate + H2O = N-acetyl-D-glucosamine 6-phosphate + (R)-lactate. It functions in the pathway amino-sugar metabolism; N-acetylmuramate degradation. Functionally, specifically catalyzes the cleavage of the D-lactyl ether substituent of MurNAc 6-phosphate, producing GlcNAc 6-phosphate and D-lactate. In Caldanaerobacter subterraneus subsp. tengcongensis (strain DSM 15242 / JCM 11007 / NBRC 100824 / MB4) (Thermoanaerobacter tengcongensis), this protein is N-acetylmuramic acid 6-phosphate etherase.